The sequence spans 346 residues: Biotin synthase (346 aa).

Polar residues predominate over residues 1–12 (MPDTATVSSESE). A disordered region spans residues 1–21 (MPDTATVSSESEFSGHAHVAA). The 229-residue stretch at 64 to 292 (NKVQLCSLLS…QSMVRLSAGR (229 aa)) folds into the Radical SAM core domain. Cysteine 79, cysteine 83, and cysteine 86 together coordinate [4Fe-4S] cluster. [2Fe-2S] cluster contacts are provided by cysteine 123, cysteine 155, cysteine 215, and arginine 287.

Belongs to the radical SAM superfamily. Biotin synthase family. Homodimer. [4Fe-4S] cluster serves as cofactor. Requires [2Fe-2S] cluster as cofactor.

The enzyme catalyses (4R,5S)-dethiobiotin + (sulfur carrier)-SH + 2 reduced [2Fe-2S]-[ferredoxin] + 2 S-adenosyl-L-methionine = (sulfur carrier)-H + biotin + 2 5'-deoxyadenosine + 2 L-methionine + 2 oxidized [2Fe-2S]-[ferredoxin]. The protein operates within cofactor biosynthesis; biotin biosynthesis; biotin from 7,8-diaminononanoate: step 2/2. Catalyzes the conversion of dethiobiotin (DTB) to biotin by the insertion of a sulfur atom into dethiobiotin via a radical-based mechanism. The sequence is that of Biotin synthase from Myxococcus xanthus (strain DK1622).